Consider the following 454-residue polypeptide: Bifunctional protein GlmU (454 aa).

Positions 1–225 are pyrophosphorylase; that stretch reads MNIVILAAGM…LWETLGVNSK (225 aa). UDP-N-acetyl-alpha-D-glucosamine-binding positions include 6 to 9, lysine 20, glutamine 71, 76 to 77, 98 to 100, glycine 135, glutamate 150, asparagine 165, and asparagine 223; these read LAAG, GT, and YGD. Aspartate 100 serves as a coordination point for Mg(2+). Position 223 (asparagine 223) interacts with Mg(2+). A linker region spans residues 226-246; it reads VQLAEVERIHQRNLAQRLLET. The N-acetyltransferase stretch occupies residues 247–454; sequence GVTLADPARI…WQRPVKKAKQ (208 aa). Positions 329 and 347 each coordinate UDP-N-acetyl-alpha-D-glucosamine. The active-site Proton acceptor is histidine 359. UDP-N-acetyl-alpha-D-glucosamine-binding residues include tyrosine 362 and asparagine 373. Acetyl-CoA-binding positions include alanine 376, 382–383, serine 401, alanine 419, and arginine 436; that span reads NY.

It in the N-terminal section; belongs to the N-acetylglucosamine-1-phosphate uridyltransferase family. The protein in the C-terminal section; belongs to the transferase hexapeptide repeat family. As to quaternary structure, homotrimer. Mg(2+) is required as a cofactor.

The protein resides in the cytoplasm. The catalysed reaction is alpha-D-glucosamine 1-phosphate + acetyl-CoA = N-acetyl-alpha-D-glucosamine 1-phosphate + CoA + H(+). It carries out the reaction N-acetyl-alpha-D-glucosamine 1-phosphate + UTP + H(+) = UDP-N-acetyl-alpha-D-glucosamine + diphosphate. It participates in nucleotide-sugar biosynthesis; UDP-N-acetyl-alpha-D-glucosamine biosynthesis; N-acetyl-alpha-D-glucosamine 1-phosphate from alpha-D-glucosamine 6-phosphate (route II): step 2/2. It functions in the pathway nucleotide-sugar biosynthesis; UDP-N-acetyl-alpha-D-glucosamine biosynthesis; UDP-N-acetyl-alpha-D-glucosamine from N-acetyl-alpha-D-glucosamine 1-phosphate: step 1/1. The protein operates within bacterial outer membrane biogenesis; LPS lipid A biosynthesis. In terms of biological role, catalyzes the last two sequential reactions in the de novo biosynthetic pathway for UDP-N-acetylglucosamine (UDP-GlcNAc). The C-terminal domain catalyzes the transfer of acetyl group from acetyl coenzyme A to glucosamine-1-phosphate (GlcN-1-P) to produce N-acetylglucosamine-1-phosphate (GlcNAc-1-P), which is converted into UDP-GlcNAc by the transfer of uridine 5-monophosphate (from uridine 5-triphosphate), a reaction catalyzed by the N-terminal domain. The chain is Bifunctional protein GlmU from Cupriavidus pinatubonensis (strain JMP 134 / LMG 1197) (Cupriavidus necator (strain JMP 134)).